The following is a 315-amino-acid chain: Isoaspartyl peptidase/L-asparaginase 1 (315 aa).

Residue S169 is modified to Phosphoserine. The active-site Nucleophile is the T183. Substrate contacts are provided by residues 211-214 (RIGD) and 233-236 (TGKG).

It belongs to the Ntn-hydrolase family. Heterotetramer of two alpha and two beta chains arranged as a dimer of alpha/beta heterodimers. Post-translationally, cleaved into an alpha and beta chain by autocatalysis; this activates the enzyme. The N-terminal residue of the beta subunit is responsible for the nucleophile hydrolase activity.

The catalysed reaction is Cleavage of a beta-linked Asp residue from the N-terminus of a polypeptide.. Acts in asparagine catabolism but also in the final steps of protein and degradation via hydrolysis of a range of isoaspartyl dipeptides. The affinity for Asn and at least 4 isoaspartyl dipeptides (L-beta-Asp-Ala, L-beta-Asp-Gly, L-beta-Asp-Leu, L-beta-Asp-Phe) is quite low, KM being greater than 4.0 mM. The enzyme is inactive on alpha-aspartyl dipeptides. The protein is Isoaspartyl peptidase/L-asparaginase 1 of Arabidopsis thaliana (Mouse-ear cress).